A 126-amino-acid polypeptide reads, in one-letter code: Protein ApaG (126 aa).

The 125-residue stretch at 2 to 126 folds into the ApaG domain; the sequence is DVSQPRIQIQ…FRLAVPNILN (125 aa).

In Vibrio vulnificus (strain CMCP6), this protein is Protein ApaG.